Here is a 76-residue protein sequence, read N- to C-terminus: MPSVRSVTCCCLLWMMLSVQLVTPGSPGTAQLSGQRTARSSGSTVCKMMCRLGYGHLYPSCGCRGKRDVVSSSMAV.

An N-terminal signal peptide occupies residues 1–24; the sequence is MPSVRSVTCCCLLWMMLSVQLVTP. Positions 25–39 are excised as a propeptide; it reads GSPGTAQLSGQRTAR. 2 cysteine pairs are disulfide-bonded: cysteine 46/cysteine 61 and cysteine 50/cysteine 63. Residue arginine 64 is modified to Arginine amide. Positions 65–76 are excised as a propeptide; the sequence is GKRDVVSSSMAV.

It belongs to the conotoxin J superfamily. Expressed by the venom duct.

The protein resides in the secreted. In terms of biological role, highly inhibits both nicotinic acetylcholine receptors (neuronal (alpha-3/beta-4) and muscular (alpha-1/beta-1/epsilon/delta) subtypes) and the voltage-gated potassium channel Kv1.6/KCNA6 subtype. This Conus ferrugineus (Cone snail) protein is Alpha/kappa-conotoxin-like fe14.2.